Here is a 264-residue protein sequence, read N- to C-terminus: NAD kinase (264 aa).

Aspartate 45 acts as the Proton acceptor in catalysis. NAD(+)-binding positions include 45 to 46 (DG), histidine 50, 121 to 122 (NE), arginine 147, aspartate 149, alanine 184, and glutamine 224.

Belongs to the NAD kinase family. The cofactor is a divalent metal cation.

The protein localises to the cytoplasm. It carries out the reaction NAD(+) + ATP = ADP + NADP(+) + H(+). Its function is as follows. Involved in the regulation of the intracellular balance of NAD and NADP, and is a key enzyme in the biosynthesis of NADP. Catalyzes specifically the phosphorylation on 2'-hydroxyl of the adenosine moiety of NAD to yield NADP. This Lysinibacillus sphaericus (strain C3-41) protein is NAD kinase.